The primary structure comprises 262 residues: Putative hydro-lyase Cbei_2760 (262 aa).

It belongs to the D-glutamate cyclase family.

This is Putative hydro-lyase Cbei_2760 from Clostridium beijerinckii (strain ATCC 51743 / NCIMB 8052) (Clostridium acetobutylicum).